Reading from the N-terminus, the 129-residue chain is MVKELIRVKKRVKKQILDGIAHIHASFNNTIISISDKKGNVLGWATSGGSGFRGSRKSTPFAAQVAVERCADIVKSYGIKNLEVMVKGPGPGRESSIRTLNTIGFRIINITDVTPIPHNGCRSPKKRRV.

The protein belongs to the universal ribosomal protein uS11 family. In terms of assembly, part of the 30S ribosomal subunit. Interacts with proteins S7 and S18. Binds to IF-3.

Located on the platform of the 30S subunit, it bridges several disparate RNA helices of the 16S rRNA. Forms part of the Shine-Dalgarno cleft in the 70S ribosome. The sequence is that of Small ribosomal subunit protein uS11 from Buchnera aphidicola subsp. Baizongia pistaciae (strain Bp).